Here is a 326-residue protein sequence, read N- to C-terminus: 4-hydroxythreonine-4-phosphate dehydrogenase (326 aa).

Substrate contacts are provided by H132 and T133. A divalent metal cation-binding residues include H163, H208, and H263. 3 residues coordinate substrate: K271, N280, and R289.

This sequence belongs to the PdxA family. Homodimer. The cofactor is Zn(2+). Mg(2+) is required as a cofactor. Requires Co(2+) as cofactor.

The protein resides in the cytoplasm. It catalyses the reaction 4-(phosphooxy)-L-threonine + NAD(+) = 3-amino-2-oxopropyl phosphate + CO2 + NADH. It functions in the pathway cofactor biosynthesis; pyridoxine 5'-phosphate biosynthesis; pyridoxine 5'-phosphate from D-erythrose 4-phosphate: step 4/5. Its function is as follows. Catalyzes the NAD(P)-dependent oxidation of 4-(phosphooxy)-L-threonine (HTP) into 2-amino-3-oxo-4-(phosphooxy)butyric acid which spontaneously decarboxylates to form 3-amino-2-oxopropyl phosphate (AHAP). In Roseobacter denitrificans (strain ATCC 33942 / OCh 114) (Erythrobacter sp. (strain OCh 114)), this protein is 4-hydroxythreonine-4-phosphate dehydrogenase.